Reading from the N-terminus, the 113-residue chain is MRHYEITLIVHPDQSAQVGTMMDKYKEIINADGGKIHKEEDWGRKHLAYPIKKIYKAHYLMMNIECDQEMLDKLNYNFRFNDAILRSLIISKNKAITTPSIMMVNKDKEKGKS.

It belongs to the bacterial ribosomal protein bS6 family.

Binds together with bS18 to 16S ribosomal RNA. This Vesicomyosocius okutanii subsp. Calyptogena okutanii (strain HA) protein is Small ribosomal subunit protein bS6.